A 76-amino-acid polypeptide reads, in one-letter code: ATP synthase subunit 9, mitochondrial (76 aa).

2 helical membrane-spanning segments follow: residues 14 to 34 (ISTI…AALI) and 52 to 72 (ILGF…SFLL).

It belongs to the ATPase C chain family. F-type ATPases have 2 components, CF(1) - the catalytic core - and CF(0) - the membrane proton channel. CF(1) has five subunits: alpha(3), beta(3), gamma(1), delta(1), epsilon(1). CF(0) has three main subunits: a, b and c.

Its subcellular location is the mitochondrion membrane. Functionally, mitochondrial membrane ATP synthase (F(1)F(0) ATP synthase or Complex V) produces ATP from ADP in the presence of a proton gradient across the membrane which is generated by electron transport complexes of the respiratory chain. F-type ATPases consist of two structural domains, F(1) - containing the extramembraneous catalytic core and F(0) - containing the membrane proton channel, linked together by a central stalk and a peripheral stalk. During catalysis, ATP synthesis in the catalytic domain of F(1) is coupled via a rotary mechanism of the central stalk subunits to proton translocation. Part of the complex F(0) domain. A homomeric c-ring of probably 10 subunits is part of the complex rotary element. This Vanderwaltozyma polyspora (strain ATCC 22028 / DSM 70294 / BCRC 21397 / CBS 2163 / NBRC 10782 / NRRL Y-8283 / UCD 57-17) (Kluyveromyces polysporus) protein is ATP synthase subunit 9, mitochondrial (ATP9).